The following is a 214-amino-acid chain: MSTKLQDHFDKITKILSGFGVEGCISYGEITFSIRDQRDIHLILKKLKKEYLFEQLTDVTAVDYLTYGQSDWQVGKVVSQTGFSRGRQQDFKTAAVDNRFEIIYQLLSMANNVRIRVKCKLKDAQIILVDSVSDLWPSANWAEREVYDMFGIYFNNHPDLRRVLTDYGFVGHPLRKDFPQTGYVEMRYDENLGRVVYEPVEIDDRVNTPRVIRN.

It belongs to the complex I 30 kDa subunit family. As to quaternary structure, NDH-1 is composed of 14 different subunits. Subunits NuoB, C, D, E, F, and G constitute the peripheral sector of the complex.

It is found in the cell inner membrane. The enzyme catalyses a quinone + NADH + 5 H(+)(in) = a quinol + NAD(+) + 4 H(+)(out). NDH-1 shuttles electrons from NADH, via FMN and iron-sulfur (Fe-S) centers, to quinones in the respiratory chain. The immediate electron acceptor for the enzyme in this species is believed to be ubiquinone. Couples the redox reaction to proton translocation (for every two electrons transferred, four hydrogen ions are translocated across the cytoplasmic membrane), and thus conserves the redox energy in a proton gradient. This Francisella tularensis subsp. mediasiatica (strain FSC147) protein is NADH-quinone oxidoreductase subunit C.